The primary structure comprises 423 residues: MAKLSPLTLIFIAACLSRILHLTILSGLSKALPLFDTSPSLLLSSPPPALRWDAIHFASVAYNGYEYEQQVAFQPGWLAVMRLAGEGVRFIRAASVVELKDVILGGTIVANVAFVAATLVLYKLTKHIFNPTFAFLTSLLYLLPPTATPSAPYTEPIYSLLTFSGIYLLSIKRQMVLAGLCFAGATTIRSTGIFNSITLMCFAVFGDAHIFDLDPKDYCKIRKKLKPFLSAILVVAPFFMFQHYTETVFCTRELKRASTARPWCSNSPPVSYGFVQKLYWNVGPFEYWTVSQLPNFALAMPILFSSLAGVVKFFSHLVSSSQVLNHGTEEIPPPPILFELYSVHVLTMALLLFTSHTQITLRVCLGDPVVWWNAVKLGFDNVQIGEAPMGQVKVNKFGRYWIGWTVVWGAVAAVLWAGHYPPA.

9 helical membrane-spanning segments follow: residues 7 to 27 (LTLI…ILSG), 102 to 122 (VILG…LVLY), 128 to 148 (IFNP…PTAT), 151 to 171 (APYT…LLSI), 191 to 211 (TGIF…AHIF), 228 to 248 (FLSA…TETV), 298 to 318 (LAMP…SHLV), 333 to 353 (PPPI…LLLF), and 400 to 420 (YWIG…AGHY).

Belongs to the PIGV family.

It localises to the endoplasmic reticulum membrane. It functions in the pathway glycolipid biosynthesis; glycosylphosphatidylinositol-anchor biosynthesis. Its function is as follows. Mannosyltransferase involved in glycosylphosphatidylinositol-anchor biosynthesis. Transfers the second mannose to the glycosylphosphatidylinositol during GPI precursor assembly. This is GPI mannosyltransferase 2 (GPI18) from Cryptococcus neoformans var. neoformans serotype D (strain B-3501A) (Filobasidiella neoformans).